We begin with the raw amino-acid sequence, 304 residues long: GTPase Era (304 aa).

In terms of domain architecture, Era-type G spans 9 to 177 (HSGFVAIVGR…VTTLSQHMPE (169 aa)). The tract at residues 17-24 (GRPNVGKS) is G1. Position 17-24 (17-24 (GRPNVGKS)) interacts with GTP. Residues 43–47 (QTTRN) are G2. Residues 64-67 (DTPG) form a G3 region. Residues 64 to 68 (DTPGI) and 127 to 130 (NKID) each bind GTP. Residues 127–130 (NKID) form a G4 region. The interval 156 to 158 (ISA) is G5. The KH type-2 domain occupies 208 to 285 (TRQEVPHSVA…YLELWVKVSE (78 aa)).

The protein belongs to the TRAFAC class TrmE-Era-EngA-EngB-Septin-like GTPase superfamily. Era GTPase family. Monomer.

Its subcellular location is the cytoplasm. The protein localises to the cell membrane. An essential GTPase that binds both GDP and GTP, with rapid nucleotide exchange. Plays a role in 16S rRNA processing and 30S ribosomal subunit biogenesis and possibly also in cell cycle regulation and energy metabolism. The protein is GTPase Era of Pediococcus pentosaceus (strain ATCC 25745 / CCUG 21536 / LMG 10740 / 183-1w).